The following is a 170-amino-acid chain: Large ribosomal subunit protein uL10 (170 aa).

It belongs to the universal ribosomal protein uL10 family. In terms of assembly, part of the ribosomal stalk of the 50S ribosomal subunit. The N-terminus interacts with L11 and the large rRNA to form the base of the stalk. The C-terminus forms an elongated spine to which L12 dimers bind in a sequential fashion forming a multimeric L10(L12)X complex.

Functionally, forms part of the ribosomal stalk, playing a central role in the interaction of the ribosome with GTP-bound translation factors. The polypeptide is Large ribosomal subunit protein uL10 (Novosphingobium aromaticivorans (strain ATCC 700278 / DSM 12444 / CCUG 56034 / CIP 105152 / NBRC 16084 / F199)).